A 145-amino-acid chain; its full sequence is Beta sliding clamp (145 aa).

Belongs to the beta sliding clamp family. As to quaternary structure, forms a ring-shaped head-to-tail homodimer around DNA which binds and tethers DNA polymerases and other proteins to the DNA. The DNA replisome complex has a single clamp-loading complex (3 tau and 1 each of delta, delta', psi and chi subunits) which binds 3 Pol III cores (1 core on the leading strand and 2 on the lagging strand) each with a beta sliding clamp dimer. Additional proteins in the replisome are other copies of gamma, psi and chi, Ssb, DNA helicase and RNA primase.

It localises to the cytoplasm. In terms of biological role, confers DNA tethering and processivity to DNA polymerases and other proteins. Acts as a clamp, forming a ring around DNA (a reaction catalyzed by the clamp-loading complex) which diffuses in an ATP-independent manner freely and bidirectionally along dsDNA. Initially characterized for its ability to contact the catalytic subunit of DNA polymerase III (Pol III), a complex, multichain enzyme responsible for most of the replicative synthesis in bacteria; Pol III exhibits 3'-5' exonuclease proofreading activity. The beta chain is required for initiation of replication as well as for processivity of DNA replication. This chain is Beta sliding clamp (dnaN), found in Vibrio harveyi (Beneckea harveyi).